The chain runs to 608 residues: Actin-related protein 8 (608 aa).

The interval 1-20 (MQRSRASSTSSGRLQASQQV) is disordered. Position 272 to 275 (272 to 275 (DIGA)) interacts with ATP.

Belongs to the actin family. ARP8 subfamily. Component of the chromatin remodeling Ino80 complex. Exists as monomers and dimers, but the dimer is most probably the biologically relevant form required for stable interactions with histones that exploits the twofold symmetry of the nucleosome core.

It is found in the nucleus. In terms of biological role, plays an important role in the functional organization of mitotic chromosomes. Exhibits low basal ATPase activity, and unable to polymerize. Functionally, proposed core component of the chromatin remodeling INO80 complex which is involved in transcriptional regulation, DNA replication and probably DNA repair. Strongly prefer nucleosomes and H3-H4 tetramers over H2A-H2B dimers, suggesting it may act as a nucleosome recognition module within the complex. This Drosophila pseudoobscura pseudoobscura (Fruit fly) protein is Actin-related protein 8.